The sequence spans 129 residues: MALIYPDNLRYFDSHEYVRLDGDIAVIGISAYAIDQLGDIVFLELPEVGSTIAIGASFGTVESVKAVEEVYAPVTGEIIERNEAALEAPEILNSDPYEQGWLLKVQLTGKPDLSDSYDAAQYQALVEGQ.

The 83-residue stretch at I24–Q106 folds into the Lipoyl-binding domain. At K65 the chain carries N6-lipoyllysine.

The protein belongs to the GcvH family. As to quaternary structure, the glycine cleavage system is composed of four proteins: P, T, L and H. (R)-lipoate serves as cofactor.

Functionally, the glycine cleavage system catalyzes the degradation of glycine. The H protein shuttles the methylamine group of glycine from the P protein to the T protein. The protein is Glycine cleavage system H protein of Synechococcus elongatus (strain ATCC 33912 / PCC 7942 / FACHB-805) (Anacystis nidulans R2).